The sequence spans 149 residues: Large ribosomal subunit protein uL11 (149 aa).

It belongs to the universal ribosomal protein uL11 family. Part of the ribosomal stalk of the 50S ribosomal subunit. Interacts with L10 and the large rRNA to form the base of the stalk. L10 forms an elongated spine to which L12 dimers bind in a sequential fashion forming a multimeric L10(L12)X complex. In terms of processing, one or more lysine residues are methylated.

Its function is as follows. Forms part of the ribosomal stalk which helps the ribosome interact with GTP-bound translation factors. The chain is Large ribosomal subunit protein uL11 from Xanthobacter autotrophicus (strain ATCC BAA-1158 / Py2).